The sequence spans 159 residues: Afifavidin (159 aa).

The first 23 residues, 1 to 23 (MRRLASLAVALPLLAVVASPALA), serve as a signal peptide directing secretion. An Avidin-like domain is found at 36 to 151 (GVPAVSSSWV…GSDTFTLVNK (116 aa)). Residues asparagine 46, serine 50, tyrosine 66, asparagine 68, and glycine 74 each contribute to the biotin site. Cysteine 75 and cysteine 104 are disulfide-bonded. 3 residues coordinate biotin: serine 106, threonine 108, and aspartate 144.

Belongs to the avidin/streptavidin family. As to quaternary structure, exhibits a dynamic oligomeric assembly: the apo form self-assembles mostly into toroid-shaped homooctamers, with a small fraction of homodimers, yet upon biotin binding the intact afifavidin consists solely of the dimer.

The protein localises to the secreted. The exact role played by afifavidin is still obscure. Forms a strong non-covalent complex with biotin and 2-iminobiotin. The chain is Afifavidin from Afifella pfennigii (Rhodobium pfennigii).